The primary structure comprises 690 residues: Elongation factor G (690 aa).

Residues 8–283 form the tr-type G domain; sequence EDYRNFGIMA…AVVDYLPSPV (276 aa). GTP is bound by residues 17–24, 81–85, and 135–138; these read AHIDAGKT, DTPGH, and NKMD.

Belongs to the TRAFAC class translation factor GTPase superfamily. Classic translation factor GTPase family. EF-G/EF-2 subfamily.

The protein localises to the cytoplasm. In terms of biological role, catalyzes the GTP-dependent ribosomal translocation step during translation elongation. During this step, the ribosome changes from the pre-translocational (PRE) to the post-translocational (POST) state as the newly formed A-site-bound peptidyl-tRNA and P-site-bound deacylated tRNA move to the P and E sites, respectively. Catalyzes the coordinated movement of the two tRNA molecules, the mRNA and conformational changes in the ribosome. In Rhodopseudomonas palustris (strain BisB18), this protein is Elongation factor G.